We begin with the raw amino-acid sequence, 491 residues long: Lysine--tRNA ligase (491 aa).

Mg(2+)-binding residues include Glu400 and Glu407.

Belongs to the class-II aminoacyl-tRNA synthetase family. In terms of assembly, homodimer. Requires Mg(2+) as cofactor.

It localises to the cytoplasm. The enzyme catalyses tRNA(Lys) + L-lysine + ATP = L-lysyl-tRNA(Lys) + AMP + diphosphate. This is Lysine--tRNA ligase from Mesomycoplasma hyopneumoniae (strain J / ATCC 25934 / NCTC 10110) (Mycoplasma hyopneumoniae).